The following is a 391-amino-acid chain: Phosphoprotein (391 aa).

2 positions are modified to phosphothreonine: Thr10 and Thr16. A compositionally biased stretch (polar residues) spans 54–65 (QKNIQHPTASHQ). 2 disordered regions span residues 54–98 (QKNI…EPLF) and 145–186 (TSTP…RSGS). Residue Ser69 is modified to Phosphoserine. A phosphothreonine mark is found at Thr91, Thr150, and Thr165. At Ser188 the chain carries Phosphoserine. Residues 218–245 (ANEIMDLLRGMDARLQHLEQKVDKVLAQ) are a coiled coil. Position 250 is a phosphothreonine (Thr250). Residue Ser257 is modified to Phosphoserine. Phosphothreonine occurs at positions 258 and 282. Residues Ser292 and Ser294 each carry the phosphoserine modification. Thr298 bears the Phosphothreonine mark. Phosphoserine occurs at positions 301 and 374. The segment at 343 to 391 (AGRKVMITKMITDCVANPQMKQAFEQRLAKASTEDALNDIKRDIIRNAI) is interaction with the nucleoprotein. Thr375 is subject to Phosphothreonine.

Belongs to the rubulavirus/avulavirus P protein family. Homotetramer. Interacts (via multimerization domain) with polymerase L; this interaction forms the polymerase L-P complex. Interacts (via N-terminus) with N0 (via Ncore); this interaction allows P to chaperon N0 to avoid N polymerization before encapsidation. Interacts (via C-terminus) with N-RNA template; this interaction positions the polymerase on the template for both transcription and replication. Interacts with host RPS6KB1 kinase; this interaction may play a role in the viral replication and transcription.

Its subcellular location is the virion. Its function is as follows. Essential cofactor of the RNA polymerase L that plays a central role in the transcription and replication by forming the polymerase complex with RNA polymerase L and recruiting L to the genomic N-RNA template for RNA synthesis. Also plays a central role in the encapsidation of nascent RNA chains by forming the encapsidation complex with the nucleocapsid protein N (N-P complex). Acts as a chaperone for newly synthesized free N protein, so-called N0, allowing encapsidation of nascent RNA chains during replication. The nucleoprotein protein N prevents excessive phosphorylation of P, which leads to down-regulation of viral transcription/ replication. Participates, together with N, in the formation of viral factories (viroplasms), which are large inclusions in the host cytoplasm where replication takes place. In Mumps virus genotype N (strain L-Zagreb vaccine) (MuV), this protein is Phosphoprotein.